Reading from the N-terminus, the 242-residue chain is Biosynthetic peptidoglycan transglycosylase (242 aa).

The helical transmembrane segment at 19 to 39 threads the bilayer; the sequence is ILAALAVFWGGGIALFSVVPV.

This sequence belongs to the glycosyltransferase 51 family.

The protein resides in the cell inner membrane. The enzyme catalyses [GlcNAc-(1-&gt;4)-Mur2Ac(oyl-L-Ala-gamma-D-Glu-L-Lys-D-Ala-D-Ala)](n)-di-trans,octa-cis-undecaprenyl diphosphate + beta-D-GlcNAc-(1-&gt;4)-Mur2Ac(oyl-L-Ala-gamma-D-Glu-L-Lys-D-Ala-D-Ala)-di-trans,octa-cis-undecaprenyl diphosphate = [GlcNAc-(1-&gt;4)-Mur2Ac(oyl-L-Ala-gamma-D-Glu-L-Lys-D-Ala-D-Ala)](n+1)-di-trans,octa-cis-undecaprenyl diphosphate + di-trans,octa-cis-undecaprenyl diphosphate + H(+). It participates in cell wall biogenesis; peptidoglycan biosynthesis. Peptidoglycan polymerase that catalyzes glycan chain elongation from lipid-linked precursors. This Salmonella paratyphi B (strain ATCC BAA-1250 / SPB7) protein is Biosynthetic peptidoglycan transglycosylase.